Consider the following 1234-residue polypeptide: Complement factor H (1234 aa).

An N-terminal signal peptide occupies residues 1 to 18 (MRLSARIIWLILWTVCAA). 20 consecutive Sushi domains span residues 19–82 (EDCK…ICRK), 83–143 (KPCG…LCEV), 144–207 (VKCL…RCVE), 208–264 (ILCT…FCEE), 265–322 (KRCS…RCTL), 324–386 (PCEF…VPCV), 387–444 (RKCV…KCIR), 446–507 (KTCS…SCIK), 508–566 (SCDM…SCYE), 567–624 (RECS…TCKG), 627–685 (ASCA…VCIE), 688–745 (RTCG…KCVA), 750–804 (EKCR…NCTS), 806–863 (TSCP…RCIE), 865–933 (IPCS…RCVG), 934–991 (LPCG…KCIK), 992–1050 (TDCD…VCKD), 1051–1109 (NSCV…KCRD), 1112–1170 (GKCG…TCLH), and 1171–1234 (ACVI…PTCV). 40 disulfides stabilise this stretch: cysteine 21-cysteine 66, cysteine 52-cysteine 80, cysteine 85-cysteine 129, cysteine 114-cysteine 141, cysteine 146-cysteine 192, cysteine 178-cysteine 205, cysteine 210-cysteine 251, cysteine 237-cysteine 262, cysteine 267-cysteine 309, cysteine 294-cysteine 320, cysteine 325-cysteine 374, cysteine 357-cysteine 385, cysteine 389-cysteine 431, cysteine 416-cysteine 442, cysteine 448-cysteine 494, cysteine 477-cysteine 505, cysteine 509-cysteine 553, cysteine 536-cysteine 564, cysteine 569-cysteine 610, cysteine 597-cysteine 622, cysteine 629-cysteine 672, cysteine 658-cysteine 683, cysteine 690-cysteine 732, cysteine 718-cysteine 743, cysteine 752-cysteine 791, cysteine 780-cysteine 802, cysteine 808-cysteine 850, cysteine 836-cysteine 861, cysteine 867-cysteine 920, cysteine 906-cysteine 931, cysteine 936-cysteine 978, cysteine 964-cysteine 989, cysteine 994-cysteine 1037, cysteine 1023-cysteine 1048, cysteine 1053-cysteine 1096, cysteine 1082-cysteine 1107, cysteine 1114-cysteine 1157, cysteine 1143-cysteine 1168, cysteine 1172-cysteine 1223, and cysteine 1206-cysteine 1233. N-linked (GlcNAc...) asparagine glycosylation is found at asparagine 676, asparagine 721, asparagine 773, and asparagine 801. The tract at residues 872 to 896 (TIEHGSINLPRSSEERRDSIESSSH) is disordered. Positions 883–896 (SSEERRDSIESSSH) are enriched in basic and acidic residues. Residues asparagine 1030 and asparagine 1061 are each glycosylated (N-linked (GlcNAc...) asparagine). Serine 1198 is subject to Phosphoserine. Asparagine 1225 is a glycosylation site (N-linked (GlcNAc...) asparagine).

As to quaternary structure, homodimer. Also forms homooligomers. Interacts with complement protein C3b; this interaction inhibits complement activation. Interacts with complement protein C3d. Interacts with CR3/ITGAM; this interaction mediates adhesion of neutrophils to pathogens leading to pathogen clearance. In terms of processing, sulfated on tyrosine residues. As to expression, CFH is one of the most abundant complement components in blood where the liver is the major source of CFH protein in vivo. in addition, CFH is secreted by additional cell types including monocytes, fibroblasts, or endothelial cells.

It is found in the secreted. Glycoprotein that plays an essential role in maintaining a well-balanced immune response by modulating complement activation. Acts as a soluble inhibitor of complement, where its binding to self markers such as glycan structures prevents complement activation and amplification on cell surfaces. Accelerates the decay of the complement alternative pathway (AP) C3 convertase C3bBb, thus preventing local formation of more C3b, the central player of the complement amplification loop. As a cofactor of the serine protease factor I, CFH also regulates proteolytic degradation of already-deposited C3b. In addition, mediates several cellular responses through interaction with specific receptors. For example, interacts with CR3/ITGAM receptor and thereby mediates the adhesion of human neutrophils to different pathogens. In turn, these pathogens are phagocytosed and destroyed. This Mus musculus (Mouse) protein is Complement factor H (Cfh).